A 284-amino-acid chain; its full sequence is Cystinosin homolog (284 aa).

7 helical membrane passes run 3-23 (ALSIISIIIGWIYFACWSLSF), 37-57 (IGLSFDFLLFNITGYACYSVF), 86-106 (IAFAIHGFVLTAITIIQCFIY), 116-136 (LGIGIATLIWVSLIVMTILGF), 139-159 (VFTWLWVINYYSYVKLFITFI), 181-201 (NVLLDFSGGVLSLLQMFLDVA), and 216-236 (LGLSLFSIAFDILFIIQHYIL). One can recognise a PQ-loop 1 domain in the interval 4–70 (LSIISIIIGW…LYFDKLVKNE (67 aa)). Residues 154–208 (LFITFIKYIPQAYLNFKNKSTSGWSVHNVLLDFSGGVLSLLQMFLDVADSGNWNI) enclose the PQ-loop 2 domain. Residues 247–269 (NLNDNNIPNNNNNNNNNINNNTP) are disordered.

The protein belongs to the cystinosin family.

The protein resides in the lysosome membrane. It carries out the reaction L-cystine(out) + H(+)(out) = L-cystine(in) + H(+)(in). Its function is as follows. Cystine/H(+) symporter that mediates export of cystine, the oxidized dimer of cysteine, from lysosomes. In Dictyostelium discoideum (Social amoeba), this protein is Cystinosin homolog (ctns).